Reading from the N-terminus, the 403-residue chain is Putative transport protein TP_0553 (403 aa).

The next 8 membrane-spanning stretches (helical) occupy residues 10 to 30 (ISLF…FVPY), 31 to 51 (LTVL…YRAL), 92 to 112 (AAVF…FIAI), 202 to 222 (LYFF…ALPL), 243 to 263 (KGLF…YGIF), 271 to 291 (LAML…CVWL), 293 to 313 (VGIS…LFVA), and 350 to 370 (TFGF…FTVI).

Belongs to the autoinducer-2 exporter (AI-2E) (TC 2.A.86) family.

Its subcellular location is the cell membrane. The chain is Putative transport protein TP_0553 from Treponema pallidum (strain Nichols).